The sequence spans 341 residues: MTKDILILAVETSCDETSVSVIKNGRDILSNTVLSQIESHKRFGGVVPEVASRHHVEGITTTINEALVDADVSMEDIDAIAVTEGPGLIGALLIGVNAAKALAFAYDKPLIPVHHIAGHIYANHIEEPLTFPLIALIVSGGHTELVYMKDHLSFEVIGETRDDAVGEAYDKVARTIGLNYPGGPQVDRLAAEGEDTYSFPRVWLDKDSYDFSFSGLKSAVINQLHNQRQKNIPIIEANVATSFQNSVVEVLTFKAIQACKEYSVQRLIVAGGVASNKGLRQSLADQCKVNDIQLTIPSPKLCTDNAAMIGVAGHSLYQQGRFADLALNGHSNIDLEEYSAE.

Residues histidine 115 and histidine 119 each coordinate Fe cation. Substrate-binding positions include 137-141, aspartate 170, glycine 183, aspartate 187, and asparagine 276; that span reads IVSGG. Aspartate 304 is a binding site for Fe cation.

This sequence belongs to the KAE1 / TsaD family. Fe(2+) serves as cofactor.

Its subcellular location is the cytoplasm. It carries out the reaction L-threonylcarbamoyladenylate + adenosine(37) in tRNA = N(6)-L-threonylcarbamoyladenosine(37) in tRNA + AMP + H(+). Required for the formation of a threonylcarbamoyl group on adenosine at position 37 (t(6)A37) in tRNAs that read codons beginning with adenine. Is involved in the transfer of the threonylcarbamoyl moiety of threonylcarbamoyl-AMP (TC-AMP) to the N6 group of A37, together with TsaE and TsaB. TsaD likely plays a direct catalytic role in this reaction. This chain is tRNA N6-adenosine threonylcarbamoyltransferase, found in Staphylococcus aureus (strain Mu3 / ATCC 700698).